We begin with the raw amino-acid sequence, 95 residues long: Large ribosomal subunit protein uL23 (95 aa).

Belongs to the universal ribosomal protein uL23 family. Part of the 50S ribosomal subunit. Contacts protein L29, and trigger factor when it is bound to the ribosome.

One of the early assembly proteins it binds 23S rRNA. One of the proteins that surrounds the polypeptide exit tunnel on the outside of the ribosome. Forms the main docking site for trigger factor binding to the ribosome. The chain is Large ribosomal subunit protein uL23 from Pelotomaculum thermopropionicum (strain DSM 13744 / JCM 10971 / SI).